A 359-amino-acid chain; its full sequence is Alanine racemase (359 aa).

Catalysis depends on Lys-34, which acts as the Proton acceptor; specific for D-alanine. At Lys-34 the chain carries N6-(pyridoxal phosphate)lysine. Arg-129 provides a ligand contact to substrate. Tyr-254 functions as the Proton acceptor; specific for L-alanine in the catalytic mechanism. Met-302 contributes to the substrate binding site.

It belongs to the alanine racemase family. Pyridoxal 5'-phosphate is required as a cofactor.

It catalyses the reaction L-alanine = D-alanine. It participates in amino-acid biosynthesis; D-alanine biosynthesis; D-alanine from L-alanine: step 1/1. In terms of biological role, catalyzes the interconversion of L-alanine and D-alanine. May also act on other amino acids. This is Alanine racemase (alr) from Yersinia pestis.